The following is a 199-amino-acid chain: MANLDTLKAALEKVLGKRVQNLIEATGELTLIVKAADYLEVARLLRDDPSLRFEQLLDLCGVDYSDYAEGAWDGLRFAAVSQLLSVTHNWRLRLRVFAPDDDFPVLPSVINVWNSVNWFEREAFDFYGIVFEGHPDLRRILTDYGFVGHPFRKDFPVSGYVEMRYDPEQKRVIYQPVTIEPREVTPRVIREENYGGTQH.

This sequence belongs to the complex I 30 kDa subunit family. As to quaternary structure, NDH-1 is composed of 14 different subunits. Subunits NuoB, C, D, E, F, and G constitute the peripheral sector of the complex.

It is found in the cell inner membrane. The enzyme catalyses a quinone + NADH + 5 H(+)(in) = a quinol + NAD(+) + 4 H(+)(out). In terms of biological role, NDH-1 shuttles electrons from NADH, via FMN and iron-sulfur (Fe-S) centers, to quinones in the respiratory chain. The immediate electron acceptor for the enzyme in this species is believed to be ubiquinone. Couples the redox reaction to proton translocation (for every two electrons transferred, four hydrogen ions are translocated across the cytoplasmic membrane), and thus conserves the redox energy in a proton gradient. The protein is NADH-quinone oxidoreductase subunit C of Cupriavidus metallidurans (strain ATCC 43123 / DSM 2839 / NBRC 102507 / CH34) (Ralstonia metallidurans).